Reading from the N-terminus, the 182-residue chain is Large ribosomal subunit protein uL5 (182 aa).

As to quaternary structure, part of the 50S ribosomal subunit; part of the 5S rRNA/uL5/uL18/bL25 (TL7) subcomplex; has also been isolated as a complex with 5S rRNA, bL25 (TL7) and DNA binding protein II. Forms a bridge to the 30S subunit in the 70S ribosome, contacting protein uS13; this bridge is straddled by the 5S rRNA. Contacts the P site tRNA.

This is one of the proteins that bind and probably mediate the attachment of the 5S RNA into the large ribosomal subunit, where it forms part of the central protuberance. In the 70S ribosome it contacts protein S13 of the 30S subunit (forming bridge B1b) connecting the head of the 30S subunit to the top of the 50S subunit. The bridge itself contacts the P site tRNA and is implicated in movement during ribosome translocation. Also contacts the P site tRNA independently of the intersubunit bridge; the 5S rRNA and some of its associated proteins might help stabilize positioning of ribosome-bound tRNAs. The sequence is that of Large ribosomal subunit protein uL5 (rplE) from Thermus thermophilus (strain ATCC 27634 / DSM 579 / HB8).